We begin with the raw amino-acid sequence, 498 residues long: Inosine-5'-monophosphate dehydrogenase (498 aa).

2 consecutive CBS domains span residues Met-98–Ile-155 and Met-159–Ser-216. NAD(+) contacts are provided by residues Asp-253 and Gly-303 to Gly-305. K(+)-binding residues include Gly-305 and Gly-307. Ser-308 is an IMP binding site. Cys-310 is a K(+) binding site. Catalysis depends on Cys-310, which acts as the Thioimidate intermediate. IMP contacts are provided by residues Asp-343–Gly-345, Gly-366–Ser-367, and Tyr-390–Gly-394. Catalysis depends on Arg-406, which acts as the Proton acceptor. Glu-421 contacts IMP. Residues Glu-475, Ser-476, and His-477 each contribute to the K(+) site.

Belongs to the IMPDH/GMPR family. In terms of assembly, homotetramer. K(+) is required as a cofactor.

It carries out the reaction IMP + NAD(+) + H2O = XMP + NADH + H(+). Its pathway is purine metabolism; XMP biosynthesis via de novo pathway; XMP from IMP: step 1/1. With respect to regulation, mycophenolic acid (MPA) is a non-competitive inhibitor that prevents formation of the closed enzyme conformation by binding to the same site as the amobile flap. In contrast, mizoribine monophosphate (MZP) is a competitive inhibitor that induces the closed conformation. MPA is a potent inhibitor of mammalian IMPDHs but a poor inhibitor of the bacterial enzymes. MZP is a more potent inhibitor of bacterial IMPDH. Its function is as follows. Catalyzes the conversion of inosine 5'-phosphate (IMP) to xanthosine 5'-phosphate (XMP), the first committed and rate-limiting step in the de novo synthesis of guanine nucleotides, and therefore plays an important role in the regulation of cell growth. This chain is Inosine-5'-monophosphate dehydrogenase, found in Rhizobium tropici.